We begin with the raw amino-acid sequence, 258 residues long: Pimeloyl-[acyl-carrier protein] methyl ester esterase (258 aa).

The region spanning 17–241 (VYLIHGWGAN…KAAHAPFLSH (225 aa)) is the AB hydrolase-1 domain. Residues tryptophan 23, 83-84 (SL), and 145-149 (FLQLQ) each bind substrate. The Nucleophile role is filled by serine 83. Active-site residues include aspartate 207 and histidine 235. Position 235 (histidine 235) interacts with substrate.

Belongs to the AB hydrolase superfamily. Carboxylesterase BioH family. In terms of assembly, monomer.

It localises to the cytoplasm. The enzyme catalyses 6-carboxyhexanoyl-[ACP] methyl ester + H2O = 6-carboxyhexanoyl-[ACP] + methanol + H(+). The protein operates within cofactor biosynthesis; biotin biosynthesis. In terms of biological role, the physiological role of BioH is to remove the methyl group introduced by BioC when the pimeloyl moiety is complete. It allows to synthesize pimeloyl-ACP via the fatty acid synthetic pathway through the hydrolysis of the ester bonds of pimeloyl-ACP esters. The sequence is that of Pimeloyl-[acyl-carrier protein] methyl ester esterase from Neisseria meningitidis serogroup B (strain ATCC BAA-335 / MC58).